The primary structure comprises 438 residues: Gamma-glutamyl phosphate reductase (438 aa).

This sequence belongs to the gamma-glutamyl phosphate reductase family.

It is found in the cytoplasm. It catalyses the reaction L-glutamate 5-semialdehyde + phosphate + NADP(+) = L-glutamyl 5-phosphate + NADPH + H(+). Its pathway is amino-acid biosynthesis; L-proline biosynthesis; L-glutamate 5-semialdehyde from L-glutamate: step 2/2. Its function is as follows. Catalyzes the NADPH-dependent reduction of L-glutamate 5-phosphate into L-glutamate 5-semialdehyde and phosphate. The product spontaneously undergoes cyclization to form 1-pyrroline-5-carboxylate. The protein is Gamma-glutamyl phosphate reductase of Prochlorococcus marinus (strain NATL2A).